We begin with the raw amino-acid sequence, 634 residues long: Glutathione S-transferase C-terminal domain-containing protein (634 aa).

Residues 131 to 333 (LGFKKTCLKA…QEVPKVKTAA (203 aa)) enclose the GST C-terminal domain. A disordered region spans residues 189–233 (RVHNDDKLRRQKLKQQKAAGSEPPSGKGKAKSKASAQKTPKDLAA). Over residues 204–226 (QKAAGSEPPSGKGKAKSKASAQK) the composition is skewed to low complexity.

This sequence belongs to the GSTCD family.

The protein resides in the cytoplasm. In Mus musculus (Mouse), this protein is Glutathione S-transferase C-terminal domain-containing protein (Gstcd).